Reading from the N-terminus, the 482-residue chain is Glutamyl-tRNA(Gln) amidotransferase subunit A (482 aa).

Catalysis depends on charge relay system residues Lys75 and Ser150. Ser174 (acyl-ester intermediate) is an active-site residue.

The protein belongs to the amidase family. GatA subfamily. As to quaternary structure, heterotrimer of A, B and C subunits.

It carries out the reaction L-glutamyl-tRNA(Gln) + L-glutamine + ATP + H2O = L-glutaminyl-tRNA(Gln) + L-glutamate + ADP + phosphate + H(+). In terms of biological role, allows the formation of correctly charged Gln-tRNA(Gln) through the transamidation of misacylated Glu-tRNA(Gln) in organisms which lack glutaminyl-tRNA synthetase. The reaction takes place in the presence of glutamine and ATP through an activated gamma-phospho-Glu-tRNA(Gln). In Thermosynechococcus vestitus (strain NIES-2133 / IAM M-273 / BP-1), this protein is Glutamyl-tRNA(Gln) amidotransferase subunit A.